Consider the following 156-residue polypeptide: ATP synthase subunit b (156 aa).

Residues 7-27 (IFFQMLVFFVLGWFTMKFVWP) form a helical membrane-spanning segment.

The protein belongs to the ATPase B chain family. In terms of assembly, F-type ATPases have 2 components, F(1) - the catalytic core - and F(0) - the membrane proton channel. F(1) has five subunits: alpha(3), beta(3), gamma(1), delta(1), epsilon(1). F(0) has three main subunits: a(1), b(2) and c(10-14). The alpha and beta chains form an alternating ring which encloses part of the gamma chain. F(1) is attached to F(0) by a central stalk formed by the gamma and epsilon chains, while a peripheral stalk is formed by the delta and b chains.

The protein resides in the cell inner membrane. Its function is as follows. F(1)F(0) ATP synthase produces ATP from ADP in the presence of a proton or sodium gradient. F-type ATPases consist of two structural domains, F(1) containing the extramembraneous catalytic core and F(0) containing the membrane proton channel, linked together by a central stalk and a peripheral stalk. During catalysis, ATP synthesis in the catalytic domain of F(1) is coupled via a rotary mechanism of the central stalk subunits to proton translocation. In terms of biological role, component of the F(0) channel, it forms part of the peripheral stalk, linking F(1) to F(0). The polypeptide is ATP synthase subunit b (Bordetella petrii (strain ATCC BAA-461 / DSM 12804 / CCUG 43448)).